The sequence spans 119 residues: Putative membrane protein insertion efficiency factor (119 aa).

The segment at 82-119 (NALRGEKGGESAADVPSGGSVSEPPGPAAETSPNAQGA) is disordered.

The protein belongs to the UPF0161 family.

It localises to the cell membrane. Its function is as follows. Could be involved in insertion of integral membrane proteins into the membrane. The protein is Putative membrane protein insertion efficiency factor of Streptomyces griseus subsp. griseus (strain JCM 4626 / CBS 651.72 / NBRC 13350 / KCC S-0626 / ISP 5235).